Here is a 324-residue protein sequence, read N- to C-terminus: Glyoxylate/hydroxypyruvate reductase B (324 aa).

Residues R237 and E266 contribute to the active site. H285 acts as the Proton donor in catalysis.

It belongs to the D-isomer specific 2-hydroxyacid dehydrogenase family. GhrB subfamily. In terms of assembly, homodimer.

It is found in the cytoplasm. The enzyme catalyses glycolate + NADP(+) = glyoxylate + NADPH + H(+). The catalysed reaction is (R)-glycerate + NAD(+) = 3-hydroxypyruvate + NADH + H(+). It carries out the reaction (R)-glycerate + NADP(+) = 3-hydroxypyruvate + NADPH + H(+). In terms of biological role, catalyzes the NADPH-dependent reduction of glyoxylate and hydroxypyruvate into glycolate and glycerate, respectively. The polypeptide is Glyoxylate/hydroxypyruvate reductase B (Shigella flexneri serotype 5b (strain 8401)).